We begin with the raw amino-acid sequence, 502 residues long: Membrane-bound lytic murein transglycosylase F (502 aa).

The signal sequence occupies residues 1–33 (MSRFISTFRSSSAQLSIVLAVILATGCSQPTTL). The segment at 34 to 264 (QEIREEGVLH…QLAERFYGHL (231 aa)) is non-LT domain. Residues 265–502 (DRLNYVGART…PELRLIPPTL (238 aa)) form an LT domain region. Residue Glu-311 is part of the active site. The tract at residues 457–502 (PSASGLEDQLAWLGDNEAGPEAPAKESQPDLRADLPPELRLIPPTL) is disordered. Residues 479 to 493 (PAKESQPDLRADLPP) show a composition bias toward basic and acidic residues.

This sequence in the N-terminal section; belongs to the bacterial solute-binding protein 3 family. In the C-terminal section; belongs to the transglycosylase Slt family.

Its subcellular location is the cell outer membrane. The enzyme catalyses Exolytic cleavage of the (1-&gt;4)-beta-glycosidic linkage between N-acetylmuramic acid (MurNAc) and N-acetylglucosamine (GlcNAc) residues in peptidoglycan, from either the reducing or the non-reducing ends of the peptidoglycan chains, with concomitant formation of a 1,6-anhydrobond in the MurNAc residue.. Functionally, murein-degrading enzyme that degrades murein glycan strands and insoluble, high-molecular weight murein sacculi, with the concomitant formation of a 1,6-anhydromuramoyl product. Lytic transglycosylases (LTs) play an integral role in the metabolism of the peptidoglycan (PG) sacculus. Their lytic action creates space within the PG sacculus to allow for its expansion as well as for the insertion of various structures such as secretion systems and flagella. The polypeptide is Membrane-bound lytic murein transglycosylase F (Marinobacter nauticus (strain ATCC 700491 / DSM 11845 / VT8) (Marinobacter aquaeolei)).